The chain runs to 299 residues: Probable lipid kinase YegS (299 aa).

One can recognise a DAGKc domain in the interval 2–133 (ANFPASLLIL…IDMARVNDKT (132 aa)). ATP contacts are provided by residues T40, 66-72 (GDGTINE), and T95. Positions 215, 218, and 220 each coordinate Mg(2+). The active-site Proton acceptor is E271.

Belongs to the diacylglycerol/lipid kinase family. YegS lipid kinase subfamily. Mg(2+) is required as a cofactor. Requires Ca(2+) as cofactor.

Its subcellular location is the cytoplasm. Probably phosphorylates lipids; the in vivo substrate is unknown. This chain is Probable lipid kinase YegS, found in Salmonella agona (strain SL483).